Here is a 318-residue protein sequence, read N- to C-terminus: MLSESSSFLKGVMLGSIFCALITMLGHIRIGHGNRMHHHEHHHLQAPNKEDILKISEDERMELSKSFRVYCIILVKPKDVSLWAAVKETWTKHCDKAEFFSSENVKVFESINMDTNDMWLMMRKAYKYAFDKYRDQYNWFFLARPTTFAIIENLKYFLLKKDPSQPFYLGHTIKSGDLEYVGMEGGIVLSVESMKRLNSLLNIPEKCPEQGGMIWKISEDKQLAVCLKYAGVFAENAEDADGKDVFNTKSVGLSIKEAMTYHPNQVVEGCCSDMAVTFNGLTPNQMHVMMYGVYRLRAFGHIFNDALVFLPPNGSDND.

At 1–6 (MLSESS) the chain is on the cytoplasmic side. Residues 7–26 (SFLKGVMLGSIFCALITMLG) traverse the membrane as a helical; Signal-anchor for type II membrane protein segment. Residues 27–318 (HIRIGHGNRM…FLPPNGSDND (292 aa)) lie on the Lumenal side of the membrane.

This sequence belongs to the glycosyltransferase 31 family. Beta3-Gal-T subfamily. As to quaternary structure, associates with core 1 beta-3-galactosyltransferase (C1GALT1), probably not with the soluble active form. As to expression, ubiquitously expressed. Abundantly expressed in salivary gland, stomach, small intestine, kidney, and testis and at intermediate levels in whole brain, cerebellum, spinal cord, thymus, spleen, trachea, lung, pancreas, ovary, and uterus.

It localises to the membrane. Its function is as follows. Probable chaperone required for the generation of 1 O-glycan Gal-beta1-3GalNAc-alpha1-Ser/Thr (T antigen), which is a precursor for many extended O-glycans in glycoproteins. Probably acts as a specific molecular chaperone assisting the folding/stability of core 1 beta-3-galactosyltransferase (C1GALT1). In Homo sapiens (Human), this protein is C1GALT1-specific chaperone 1 (C1GALT1C1).